We begin with the raw amino-acid sequence, 320 residues long: NADH-ubiquinone oxidoreductase chain 1 (320 aa).

Helical transmembrane passes span 3–23 (LITI…VAFL), 72–92 (ILLI…WTPI), 103–123 (LGFL…LWAG), 147–167 (VTLG…TMQL), 174–194 (HIWL…STLA), 226–246 (FFLA…ILFI), 255–275 (ELFL…FLWI), and 295–315 (FLPL…SISG).

This sequence belongs to the complex I subunit 1 family.

It is found in the mitochondrion inner membrane. The catalysed reaction is a ubiquinone + NADH + 5 H(+)(in) = a ubiquinol + NAD(+) + 4 H(+)(out). Core subunit of the mitochondrial membrane respiratory chain NADH dehydrogenase (Complex I) that is believed to belong to the minimal assembly required for catalysis. Complex I functions in the transfer of electrons from NADH to the respiratory chain. The immediate electron acceptor for the enzyme is believed to be ubiquinone. This chain is NADH-ubiquinone oxidoreductase chain 1 (MT-ND1), found in Varanus jobiensis (Peach throat monitor).